A 152-amino-acid chain; its full sequence is Ribonuclease pancreatic beta-type (152 aa).

A signal peptide spans 1-25 (MGLEKSFILFSLLVLVLGWVQPSLG). Positions 31–45 (SSADKFKRQHMDPES) are enriched in basic and acidic residues. The tract at residues 31–53 (SSADKFKRQHMDPESPSKSSPTY) is disordered. Substrate contacts are provided by Lys-35 and Arg-38. Catalysis depends on His-40, which acts as the Proton acceptor. Cystine bridges form between Cys-54/Cys-112, Cys-68/Cys-123, Cys-86/Cys-138, and Cys-93/Cys-100. Residues 69–73 (KPVNT), Lys-94, and Arg-113 contribute to the substrate site. The active-site Proton donor is the His-147.

This sequence belongs to the pancreatic ribonuclease family. In terms of assembly, monomer.

Its subcellular location is the secreted. The catalysed reaction is an [RNA] containing cytidine + H2O = an [RNA]-3'-cytidine-3'-phosphate + a 5'-hydroxy-ribonucleotide-3'-[RNA].. It carries out the reaction an [RNA] containing uridine + H2O = an [RNA]-3'-uridine-3'-phosphate + a 5'-hydroxy-ribonucleotide-3'-[RNA].. Functionally, endonuclease that catalyzes the cleavage of RNA on the 3' side of pyrimidine nucleotides. Acts on single-stranded and double-stranded RNA. In Rattus exulans (Polynesian rat), this protein is Ribonuclease pancreatic beta-type.